Reading from the N-terminus, the 311-residue chain is Tricarboxylate transport protein, mitochondrial (311 aa).

A propeptide spans 1–13 (MAAARAPRALTSA) (removed in mature form). Over residues 1–15 (MAAARAPRALTSASP) the composition is skewed to low complexity. The segment at 1–22 (MAAARAPRALTSASPGSGKAKL) is disordered. Solcar repeat units lie at residues 23–111 (THPG…LSNH), 122–208 (TRGL…LRNW), and 218–303 (MNPL…VVKL). The next 3 helical transmembrane spans lie at 29 to 46 (ILAG…TFPT), 86 to 105 (GLSS…FGTF), and 129 to 143 (LGAG…VCPM). A Phosphoserine modification is found at Ser-156. 3 helical membrane-spanning segments follow: residues 183 to 202 (GLTA…FFVM), 224 to 241 (GVFG…NTPL), and 278 to 297 (GTVP…FIIY).

This sequence belongs to the mitochondrial carrier (TC 2.A.29) family. Possesses a short cleavable presequence, which, however, is found to be dispensable both for targeting to mitochondria and insertion into the inner membrane. However, the presequence is required to keep SLC25A1 in a soluble state and thus in an import-competent state. Mature SLC25A1 lacking the presequence is prone to aggregation.

It is found in the mitochondrion inner membrane. The protein localises to the mitochondrion membrane. The catalysed reaction is (S)-malate(in) + citrate(out) = (S)-malate(out) + citrate(in). The enzyme catalyses D-threo-isocitrate(in) + citrate(out) = D-threo-isocitrate(out) + citrate(in). It catalyses the reaction citrate(out) + succinate(in) = citrate(in) + succinate(out). It carries out the reaction phosphoenolpyruvate(in) + citrate(out) = phosphoenolpyruvate(out) + citrate(in). The catalysed reaction is cis-aconitate(in) + citrate(out) = cis-aconitate(out) + citrate(in). The enzyme catalyses trans-aconitate(in) + citrate(out) = trans-aconitate(out) + citrate(in). It catalyses the reaction maleate(in) + citrate(out) = maleate(out) + citrate(in). In terms of biological role, mitochondrial electroneutral antiporter that exports citrate from the mitochondria into the cytosol in exchange for malate. Also able to mediate the exchange of citrate for isocitrate, phosphoenolpyruvate, cis-aconitate and to a lesser extent trans-aconitate, maleate and succinate. In the cytoplasm, citrate plays important roles in fatty acid and sterol synthesis, regulation of glycolysis, protein acetylation, and other physiopathological processes. The protein is Tricarboxylate transport protein, mitochondrial (SLC25A1) of Bos taurus (Bovine).